Reading from the N-terminus, the 124-residue chain is Small ribosomal subunit protein uS12 (124 aa).

D89 bears the 3-methylthioaspartic acid mark. The segment at 105-124 (QGVKNRKQARSRYGAKKEKS) is disordered. A compositionally biased stretch (basic residues) spans 108-118 (KNRKQARSRYG).

It belongs to the universal ribosomal protein uS12 family. In terms of assembly, part of the 30S ribosomal subunit. Contacts proteins S8 and S17. May interact with IF1 in the 30S initiation complex.

With S4 and S5 plays an important role in translational accuracy. In terms of biological role, interacts with and stabilizes bases of the 16S rRNA that are involved in tRNA selection in the A site and with the mRNA backbone. Located at the interface of the 30S and 50S subunits, it traverses the body of the 30S subunit contacting proteins on the other side and probably holding the rRNA structure together. The combined cluster of proteins S8, S12 and S17 appears to hold together the shoulder and platform of the 30S subunit. This chain is Small ribosomal subunit protein uS12, found in Mycobacteroides abscessus (strain ATCC 19977 / DSM 44196 / CCUG 20993 / CIP 104536 / JCM 13569 / NCTC 13031 / TMC 1543 / L948) (Mycobacterium abscessus).